The following is a 1907-amino-acid chain: Receptor-type tyrosine-protein phosphatase F (1907 aa).

The N-terminal stretch at 1–29 (MAPEPAPGRTMVPLVPALVMLGLVAGAHG) is a signal peptide. Over 30–1263 (DSKPVFIKVP…QQQEEPEMLW (1234 aa)) the chain is Extracellular. Ig-like C2-type domains are found at residues 33–123 (PVFI…AKLS), 135–224 (PSID…ANLY), and 232–314 (PRFS…AQVT). Cysteine 54 and cysteine 107 are joined by a disulfide. Heparin is bound at residue 68 to 77 (KKGKKVSSQR). A glycan (N-linked (GlcNAc...) asparagine) is linked at asparagine 117. An intrachain disulfide couples cysteine 156 to cysteine 207. 2 N-linked (GlcNAc...) asparagine glycosylation sites follow: asparagine 250 and asparagine 295. Residues cysteine 253 and cysteine 298 are joined by a disulfide bond. Fibronectin type-III domains are found at residues 321-411 (PPID…TGEQ), 416-510 (PPRR…TQQG), 514-604 (QPAD…TAQS), 609-706 (PPQK…TDED), 711-819 (PPRK…TTGA), 820-914 (VPGR…PEDL), 918-1010 (FPQN…TMPV), and 1014-1098 (FAKN…TAPD). Residues 398–417 (GPPSEAVRARTGEQAPSSPP) form a disordered region. The interval 693 to 712 (GPESSPVLVRTDEDVPSGPP) is disordered. Asparagine 721 carries N-linked (GlcNAc...) asparagine glycosylation. An N-linked (GlcNAc...) asparagine glycan is attached at asparagine 966. Residues 1264 to 1284 (VTGPVLAVILIILIVIAILLF) form a helical membrane-spanning segment. Residues 1285-1907 (KRKRTHSPSS…YLGSFDHYAT (623 aa)) are Cytoplasmic-facing. At serine 1305 the chain carries Phosphoserine. Tyrosine-protein phosphatase domains follow at residues 1352–1607 (FSQE…LLEA) and 1639–1898 (MELE…ALEY). Residues aspartate 1516, 1548–1554 (CSAGVGR), and glutamine 1592 each bind substrate. Residue cysteine 1548 is the Phosphocysteine intermediate of the active site. The active-site Phosphocysteine intermediate is cysteine 1839.

It belongs to the protein-tyrosine phosphatase family. Receptor class 2A subfamily. As to quaternary structure, interacts with GRIP1. Interacts with PPFIA1, PPFIA2 and PPFIA3. Interacts with INSR.

Its subcellular location is the membrane. It carries out the reaction O-phospho-L-tyrosyl-[protein] + H2O = L-tyrosyl-[protein] + phosphate. In terms of biological role, possible cell adhesion receptor. It possesses an intrinsic protein tyrosine phosphatase activity (PTPase) and dephosphorylates EPHA2 regulating its activity. Its function is as follows. The first PTPase domain has enzymatic activity, while the second one seems to affect the substrate specificity of the first one. The protein is Receptor-type tyrosine-protein phosphatase F (PTPRF) of Homo sapiens (Human).